A 283-amino-acid chain; its full sequence is Thymidylate synthase (283 aa).

Arginine 21 lines the dUMP pocket. Histidine 51 is a (6R)-5,10-methylene-5,6,7,8-tetrahydrofolate binding site. 123–124 (RR) lines the dUMP pocket. Cysteine 156 functions as the Nucleophile in the catalytic mechanism. DUMP contacts are provided by residues 185-188 (RSAD), asparagine 196, and 226-228 (HIY). Aspartate 188 contacts (6R)-5,10-methylene-5,6,7,8-tetrahydrofolate. Residue alanine 282 participates in (6R)-5,10-methylene-5,6,7,8-tetrahydrofolate binding.

It belongs to the thymidylate synthase family. Bacterial-type ThyA subfamily. In terms of assembly, homodimer.

It localises to the cytoplasm. It catalyses the reaction dUMP + (6R)-5,10-methylene-5,6,7,8-tetrahydrofolate = 7,8-dihydrofolate + dTMP. It participates in pyrimidine metabolism; dTTP biosynthesis. Functionally, catalyzes the reductive methylation of 2'-deoxyuridine-5'-monophosphate (dUMP) to 2'-deoxythymidine-5'-monophosphate (dTMP) while utilizing 5,10-methylenetetrahydrofolate (mTHF) as the methyl donor and reductant in the reaction, yielding dihydrofolate (DHF) as a by-product. This enzymatic reaction provides an intracellular de novo source of dTMP, an essential precursor for DNA biosynthesis. This chain is Thymidylate synthase, found in Flavobacterium johnsoniae (strain ATCC 17061 / DSM 2064 / JCM 8514 / BCRC 14874 / CCUG 350202 / NBRC 14942 / NCIMB 11054 / UW101) (Cytophaga johnsonae).